The following is a 511-amino-acid chain: MKDNKIIIFDTTLRDGEQALGSSLGINQKLQIALALENLGVDVIEAGFPVSSQGDFKAVQKIASKVKNSTICALSRALDKDIDMAYEALKVAKHFRIHTFIATSTLHMQDKLKKDFDEILSMAKRAIIRARSYTDDVEFSCEDAGRTPIDNLCFMVENAIKAGAKTINIPDTVGYTLPSEFANIIKILFNKVPNIDKAIISVHCHNDLGMATGNSLSAILQGARQIECTINGLGERAGNCALEEVVMAIKTRKDYLKGFYTDIKCENIFKTSKLVSAITNESIPSHKAIVGSNAFSHSSGIHQDGVLKNRQTYEIISPSAIGIHENRMLMTARSGRAMIKTCLENLGYDENTYNLDDVYERFLRLADKKGQVYDYDLEALMFLSYESEEENEFVLEKLSVISGNIPTACVCMRIKEELKTEACTGNGPVEAVFNCIARITNLKPALKAYSINAKSSGVDAQGQVDVDLEFKGRKFHGKGLSTDVIEASAQAFVSAYNAIYRSLKVEERKMA.

One can recognise a Pyruvate carboxyltransferase domain in the interval 6–269 (IIIFDTTLRD…YTDIKCENIF (264 aa)). The Mn(2+) site is built by Asp-15, His-203, His-205, and Asn-239. The interval 394-511 (VLEKLSVISG…SLKVEERKMA (118 aa)) is regulatory domain.

It belongs to the alpha-IPM synthase/homocitrate synthase family. LeuA type 1 subfamily. Homodimer. The cofactor is Mn(2+).

The protein localises to the cytoplasm. It carries out the reaction 3-methyl-2-oxobutanoate + acetyl-CoA + H2O = (2S)-2-isopropylmalate + CoA + H(+). It participates in amino-acid biosynthesis; L-leucine biosynthesis; L-leucine from 3-methyl-2-oxobutanoate: step 1/4. Catalyzes the condensation of the acetyl group of acetyl-CoA with 3-methyl-2-oxobutanoate (2-ketoisovalerate) to form 3-carboxy-3-hydroxy-4-methylpentanoate (2-isopropylmalate). This is 2-isopropylmalate synthase from Campylobacter jejuni subsp. jejuni serotype O:2 (strain ATCC 700819 / NCTC 11168).